Reading from the N-terminus, the 557-residue chain is MTKYVFVTGGVVSSLGKGIAAASLAAILESRGLKVTLLKLDPYINVDPGTMSPFQHGEVFVTEDGAETDLDLGHYERFISTKMRKANNFTTGQIYESVIRKERRGDYLGKTVQVIPHITNEIQAFIERGAASATCGEPDVAIVEVGGTVGDIESLPFLEAARQMSLRMGRNSACFVHLTLVPWVATAGELKTKPTQHSVQKLREIGISPHVLLCRADRRIPDDERAKISMFSNVPEDAVISVWDADSIYKIPQMLHDQGLDAIICEELKLTPHAADLSMWSDLVEKLEHPKHEVTIGMVGKYVDLTESYKSLIEALRHASMHTSTKVNIEYIDSEEVETQGVESLKHLDAVLVPGGFGRRGTEGKIAAIRYAREAKVPYLGICLGMQLAVIEFARDVVGLKDANSTEFDQETPNRVVALITEWYDREGRVEKRTEESDLGGTMRLGSQRCPIKPGTMAEEIYGKDVNERHRHRYEVNNRFVPQLEAGGLIISARTPSEDLPEMMELPRSMHPWFVGVQFHPEFTSTPRDGHPLFKSFVEAALAHHEAQAPVAVGEKA.

An amidoligase domain region spans residues 1–270 (MTKYVFVTGG…DAIICEELKL (270 aa)). S13 is a CTP binding site. S13 serves as a coordination point for UTP. Residues 14-19 (SLGKGI) and D71 contribute to the ATP site. Mg(2+)-binding residues include D71 and E144. CTP contacts are provided by residues 151 to 153 (DIE), 191 to 196 (KTKPTQ), and K227. UTP is bound by residues 191-196 (KTKPTQ) and K227. Residues 295–547 (TIGMVGKYVD…VEAALAHHEA (253 aa)) enclose the Glutamine amidotransferase type-1 domain. An L-glutamine-binding site is contributed by G356. Residue C383 is the Nucleophile; for glutamine hydrolysis of the active site. L-glutamine-binding positions include 384–387 (LGMQ), E407, and R473. Catalysis depends on residues H520 and E522.

This sequence belongs to the CTP synthase family. As to quaternary structure, homotetramer.

It catalyses the reaction UTP + L-glutamine + ATP + H2O = CTP + L-glutamate + ADP + phosphate + 2 H(+). The catalysed reaction is L-glutamine + H2O = L-glutamate + NH4(+). The enzyme catalyses UTP + NH4(+) + ATP = CTP + ADP + phosphate + 2 H(+). It functions in the pathway pyrimidine metabolism; CTP biosynthesis via de novo pathway; CTP from UDP: step 2/2. Allosterically activated by GTP, when glutamine is the substrate; GTP has no effect on the reaction when ammonia is the substrate. The allosteric effector GTP functions by stabilizing the protein conformation that binds the tetrahedral intermediate(s) formed during glutamine hydrolysis. Inhibited by the product CTP, via allosteric rather than competitive inhibition. Catalyzes the ATP-dependent amination of UTP to CTP with either L-glutamine or ammonia as the source of nitrogen. Regulates intracellular CTP levels through interactions with the four ribonucleotide triphosphates. The protein is CTP synthase of Paraburkholderia phytofirmans (strain DSM 17436 / LMG 22146 / PsJN) (Burkholderia phytofirmans).